The sequence spans 501 residues: 7-alpha-hydroxycholest-4-en-3-one 12-alpha-hydroxylase (501 aa).

A helical transmembrane segment spans residues 1–21 (MVLWGPVLGALLVVIAGYLCL). Position 326 is a phosphoserine (Ser-326). Cys-440 is a heme binding site.

This sequence belongs to the cytochrome P450 family. Heme is required as a cofactor. As to expression, liver.

Its subcellular location is the endoplasmic reticulum membrane. It is found in the microsome membrane. The enzyme catalyses 7alpha-hydroxycholest-4-en-3-one + reduced [NADPH--hemoprotein reductase] + O2 = 7alpha,12alpha-dihydroxycholest-4-en-3-one + oxidized [NADPH--hemoprotein reductase] + H2O + H(+). The catalysed reaction is 5beta-cholestane-3alpha,7alpha-diol + reduced [NADPH--hemoprotein reductase] + O2 = 5beta-cholestane-3alpha,7alpha,12alpha-triol + oxidized [NADPH--hemoprotein reductase] + H2O + H(+). It catalyses the reaction chenodeoxycholate + reduced [NADPH--hemoprotein reductase] + O2 = cholate + oxidized [NADPH--hemoprotein reductase] + H2O + H(+). It functions in the pathway lipid metabolism; bile acid biosynthesis. Its function is as follows. A cytochrome P450 monooxygenase involved in primary bile acid biosynthesis. Catalyzes the 12alpha-hydroxylation of 7alpha-hydroxy-4-cholesten-3-one, an intermediate metabolite in cholic acid biosynthesis. Controls biliary balance of cholic acid and chenodeoxycholic acid, ultimately regulating the intestinal absorption of dietary lipids. Mechanistically, uses molecular oxygen inserting one oxygen atom into a substrate, and reducing the second into a water molecule, with two electrons provided by NADPH via cytochrome P450 reductase (CPR; NADPH--hemoprotein reductase). This chain is 7-alpha-hydroxycholest-4-en-3-one 12-alpha-hydroxylase, found in Homo sapiens (Human).